We begin with the raw amino-acid sequence, 333 residues long: tRNA(Ile)-lysidine synthase (333 aa).

Ser-33 to Ser-38 contacts ATP.

This sequence belongs to the tRNA(Ile)-lysidine synthase family.

The protein localises to the cytoplasm. The enzyme catalyses cytidine(34) in tRNA(Ile2) + L-lysine + ATP = lysidine(34) in tRNA(Ile2) + AMP + diphosphate + H(+). Ligates lysine onto the cytidine present at position 34 of the AUA codon-specific tRNA(Ile) that contains the anticodon CAU, in an ATP-dependent manner. Cytidine is converted to lysidine, thus changing the amino acid specificity of the tRNA from methionine to isoleucine. The protein is tRNA(Ile)-lysidine synthase of Salinispora arenicola (strain CNS-205).